A 95-amino-acid polypeptide reads, in one-letter code: UPF0381 protein HI_0400 (95 aa).

This sequence belongs to the UPF0381 family.

This chain is UPF0381 protein HI_0400, found in Haemophilus influenzae (strain ATCC 51907 / DSM 11121 / KW20 / Rd).